A 640-amino-acid polypeptide reads, in one-letter code: 1-deoxy-D-xylulose-5-phosphate synthase (640 aa).

Residues H75 and 117–119 (GHA) each bind thiamine diphosphate. D146 is a Mg(2+) binding site. Thiamine diphosphate contacts are provided by residues 147–148 (AA), N175, and E370. N175 contacts Mg(2+).

The protein belongs to the transketolase family. DXPS subfamily. Homodimer. Requires Mg(2+) as cofactor. The cofactor is thiamine diphosphate.

The catalysed reaction is D-glyceraldehyde 3-phosphate + pyruvate + H(+) = 1-deoxy-D-xylulose 5-phosphate + CO2. The protein operates within metabolic intermediate biosynthesis; 1-deoxy-D-xylulose 5-phosphate biosynthesis; 1-deoxy-D-xylulose 5-phosphate from D-glyceraldehyde 3-phosphate and pyruvate: step 1/1. Functionally, catalyzes the acyloin condensation reaction between C atoms 2 and 3 of pyruvate and glyceraldehyde 3-phosphate to yield 1-deoxy-D-xylulose-5-phosphate (DXP). This chain is 1-deoxy-D-xylulose-5-phosphate synthase, found in Chlamydia trachomatis serovar L2 (strain ATCC VR-902B / DSM 19102 / 434/Bu).